The following is a 162-amino-acid chain: Heat shock protein beta-6 (162 aa).

Residues 1 to 72 (MEIRVPVQPS…PTAQVPTDPG (72 aa)) are involved in stabilization of the HSPB1:HSBP6 heterodimer. Position 16 is a phosphoserine (S16). An Isoglutamyl lysine isopeptide (Gln-Lys) (interchain with K-162) cross-link involves residue Q31. In terms of domain architecture, sHSP spans 56-162 (RAPSVALPTA…ASLPSPPAAK (107 aa)). Q66 bears the Deamidated glutamine mark. A Phosphoserine modification is found at S157. An Isoglutamyl lysine isopeptide (Lys-Gln) (interchain with Q-31) cross-link involves residue K162.

Belongs to the small heat shock protein (HSP20) family. Homodimer. Small heat shock proteins form high molecular mass oligomers containing variable number of monomers; these oligomers display a very flexible quaternary structure easily exchanging their subunits. Heterooligomer with HSPB1; formed through oligomerization of HSPB1:HSBP6 dimers; subunit exchange leads to formation of at least two different heterooligomeric complexes, differing in variable quantities of HSPB1 and HSPB6 homodimers in addition to HSPB1:HSPB6 heterodimers. Heterooligomer with CRYAB; large heterooligomers consist of CRYAB homodimers and HSPB5:HSPB6 heterodimers but lacking HSPB6 homodimers. Interacts with BAG3. Interacts (phosphorylated) with YWHAZ. Interacts with PDE4A and PDE4D; required for maintenance of the non-phosphorylated state of HSPB6 under basal conditions. Interacts with KDR. Interacts with PRKD1. In terms of processing, the N-terminus is blocked. Phosphorylated at Ser-16 by PKA and probably PKD1K; required to protect cardiomyocytes from apoptosis. Widely expressed. High expression in muscle tissues.

The protein localises to the cytoplasm. It is found in the nucleus. Its subcellular location is the secreted. Small heat shock protein which functions as a molecular chaperone probably maintaining denatured proteins in a folding-competent state. Seems to have versatile functions in various biological processes. Plays a role in regulating muscle function such as smooth muscle vasorelaxation and cardiac myocyte contractility. May regulate myocardial angiogenesis implicating KDR. Overexpression mediates cardioprotection and angiogenesis after induced damage. Stabilizes monomeric YWHAZ thereby supporting YWHAZ chaperone-like activity. The protein is Heat shock protein beta-6 (Hspb6) of Rattus norvegicus (Rat).